Reading from the N-terminus, the 507-residue chain is MATLSRNLRLSLDTPTSTFVRTKIVCTIGPKTMSEEALIKLIETGMNVCRLNFSHGTHDYHGQVIKNVRSAMEKTGKIIAIMLDTKGPEIRTGKIEDRCGYVDLFVGQEILVDTNMNQPGTSFRISIDYKGLLDSVKVGGYILIADGVISLSITAVEKEKGHVVCRVNNNSRLGENKNVHLPGAIVNLPAVSEKDILDIKFGVEQNVDFIAASFIRKADDVNEIREILGEKGKDIQIISKIENVEGVDNFNEILEVSDGIMVARGDLGVEVQMEKIFVAQKMIVSKCNAAGKPVITATQMLESMIKNPRPTRAEATDVANAVLDGSDCVMLSGETASGDYPYEAVDIMAKICREAELVESSTDYQTLFAALKLSSAKPVSIAETVASYAVATAIDLKADLIITLTETGLTARLVSKYRPSIPIIAVTSWSYTVKHLLATRGAIPFLVESLVGTDKLVESCLEYAMKHNLCKKGSRVVIVSGVMEGVPGKTNSLRVLTVGESIKDLKV.

Arg50 provides a ligand contact to substrate. K(+)-binding residues include Asn52, Ser54, Asp84, and Thr85. 52-55 (NFSH) provides a ligand contact to ATP. Residues Arg91 and Lys177 each contribute to the ATP site. Mg(2+) is bound at residue Glu242. Substrate is bound by residues Gly265, Asp266, and Thr298. Asp266 contributes to the Mg(2+) binding site.

Belongs to the pyruvate kinase family. As to quaternary structure, homotetramer. The cofactor is Mg(2+). Requires K(+) as cofactor.

The catalysed reaction is pyruvate + ATP = phosphoenolpyruvate + ADP + H(+). It functions in the pathway carbohydrate degradation; glycolysis; pyruvate from D-glyceraldehyde 3-phosphate: step 5/5. This is Pyruvate kinase (pyk) from Dictyostelium discoideum (Social amoeba).